A 227-amino-acid polypeptide reads, in one-letter code: Lipoprotein-releasing system ATP-binding protein LolD (227 aa).

An ABC transporter domain is found at 6-227 (LEMRGITKSY…RLDAGQLSDV (222 aa)). Residue 43–50 (APSGAGKS) participates in ATP binding.

This sequence belongs to the ABC transporter superfamily. Lipoprotein translocase (TC 3.A.1.125) family. The complex is composed of two ATP-binding proteins (LolD) and two transmembrane proteins (LolC and LolE).

Its subcellular location is the cell inner membrane. Its function is as follows. Part of the ABC transporter complex LolCDE involved in the translocation of mature outer membrane-directed lipoproteins, from the inner membrane to the periplasmic chaperone, LolA. Responsible for the formation of the LolA-lipoprotein complex in an ATP-dependent manner. The polypeptide is Lipoprotein-releasing system ATP-binding protein LolD (Roseobacter denitrificans (strain ATCC 33942 / OCh 114) (Erythrobacter sp. (strain OCh 114))).